The primary structure comprises 187 residues: MVRLIVGLGNPGPAYDRTRHNAGFWFIDRLAAAHGCVLREESRFHGRVGAINLTEPVHLLAPLTFMNRSGLAVAAMARFYKIAPEHILVVHDELDFGPGVVRIKRDGGHGGHNGLRDIMAQLGSGGFLRLRIGIGRPAGSMAVADYVLAAPSVSDRQAISGAIEKALACLSELLAGHVEQVMNRLHV.

Tyr-15 contacts tRNA. The Proton acceptor role is filled by His-20. The tRNA site is built by Phe-65, Asn-67, and Asn-113.

This sequence belongs to the PTH family. In terms of assembly, monomer.

The protein resides in the cytoplasm. It carries out the reaction an N-acyl-L-alpha-aminoacyl-tRNA + H2O = an N-acyl-L-amino acid + a tRNA + H(+). Its function is as follows. Hydrolyzes ribosome-free peptidyl-tRNAs (with 1 or more amino acids incorporated), which drop off the ribosome during protein synthesis, or as a result of ribosome stalling. Functionally, catalyzes the release of premature peptidyl moieties from peptidyl-tRNA molecules trapped in stalled 50S ribosomal subunits, and thus maintains levels of free tRNAs and 50S ribosomes. The protein is Peptidyl-tRNA hydrolase of Methylococcus capsulatus (strain ATCC 33009 / NCIMB 11132 / Bath).